The sequence spans 296 residues: tRNA dimethylallyltransferase (296 aa).

2-9 (GPTASGKT) is an ATP binding site. Position 4 to 9 (4 to 9 (TASGKT)) interacts with substrate. 3 interaction with substrate tRNA regions span residues 27–30 (DSAL), 151–155 (QRLAR), and 232–237 (RCVGYR).

This sequence belongs to the IPP transferase family. As to quaternary structure, monomer. Mg(2+) is required as a cofactor.

The enzyme catalyses adenosine(37) in tRNA + dimethylallyl diphosphate = N(6)-dimethylallyladenosine(37) in tRNA + diphosphate. Functionally, catalyzes the transfer of a dimethylallyl group onto the adenine at position 37 in tRNAs that read codons beginning with uridine, leading to the formation of N6-(dimethylallyl)adenosine (i(6)A). This chain is tRNA dimethylallyltransferase, found in Shewanella pealeana (strain ATCC 700345 / ANG-SQ1).